A 105-amino-acid polypeptide reads, in one-letter code: Small ribosomal subunit protein uS10 (105 aa).

The protein belongs to the universal ribosomal protein uS10 family. As to quaternary structure, part of the 30S ribosomal subunit.

Its function is as follows. Involved in the binding of tRNA to the ribosomes. The protein is Small ribosomal subunit protein uS10 of Rickettsia peacockii (strain Rustic).